Reading from the N-terminus, the 310-residue chain is N-acetyl-gamma-glutamyl-phosphate reductase (310 aa).

C117 is a catalytic residue.

The protein belongs to the NAGSA dehydrogenase family. Type 2 subfamily.

Its subcellular location is the cytoplasm. The enzyme catalyses N-acetyl-L-glutamate 5-semialdehyde + phosphate + NADP(+) = N-acetyl-L-glutamyl 5-phosphate + NADPH + H(+). The protein operates within amino-acid biosynthesis; L-arginine biosynthesis; N(2)-acetyl-L-ornithine from L-glutamate: step 3/4. Catalyzes the NADPH-dependent reduction of N-acetyl-5-glutamyl phosphate to yield N-acetyl-L-glutamate 5-semialdehyde. This is N-acetyl-gamma-glutamyl-phosphate reductase from Rhizobium leguminosarum bv. trifolii (strain WSM2304).